The following is a 229-amino-acid chain: Uracil-DNA glycosylase (229 aa).

The Proton acceptor role is filled by Asp64.

This sequence belongs to the uracil-DNA glycosylase (UDG) superfamily. UNG family.

The protein resides in the cytoplasm. The catalysed reaction is Hydrolyzes single-stranded DNA or mismatched double-stranded DNA and polynucleotides, releasing free uracil.. Its function is as follows. Excises uracil residues from the DNA which can arise as a result of misincorporation of dUMP residues by DNA polymerase or due to deamination of cytosine. In Geobacillus kaustophilus (strain HTA426), this protein is Uracil-DNA glycosylase.